Here is a 436-residue protein sequence, read N- to C-terminus: Glutamyl-tRNA reductase (436 aa).

Substrate contacts are provided by residues 49–52 (TCNR), Ser109, 114–116 (EGQ), and Gln120. Cys50 functions as the Nucleophile in the catalytic mechanism. Residue 198–203 (GAGRMS) participates in NADP(+) binding.

Belongs to the glutamyl-tRNA reductase family. In terms of assembly, homodimer.

It catalyses the reaction (S)-4-amino-5-oxopentanoate + tRNA(Glu) + NADP(+) = L-glutamyl-tRNA(Glu) + NADPH + H(+). It participates in porphyrin-containing compound metabolism; protoporphyrin-IX biosynthesis; 5-aminolevulinate from L-glutamyl-tRNA(Glu): step 1/2. It functions in the pathway porphyrin-containing compound metabolism; chlorophyll biosynthesis. In terms of biological role, catalyzes the NADPH-dependent reduction of glutamyl-tRNA(Glu) to glutamate 1-semialdehyde (GSA). This is Glutamyl-tRNA reductase from Prochlorococcus marinus (strain MIT 9215).